The chain runs to 150 residues: Transcriptional regulator MraZ (150 aa).

SpoVT-AbrB domains are found at residues 8 to 55 (FINN…GISH) and 84 to 127 (AVQL…QPQN).

This sequence belongs to the MraZ family. In terms of assembly, forms oligomers.

The protein resides in the cytoplasm. It is found in the nucleoid. The sequence is that of Transcriptional regulator MraZ from Rickettsia bellii (strain OSU 85-389).